We begin with the raw amino-acid sequence, 479 residues long: Cyclic AMP-responsive element-binding protein 3-like protein 3 (479 aa).

Residues 1 to 317 (MDGDIAAGKM…QSTSKPAHAG (317 aa)) lie on the Cytoplasmic side of the membrane. The tract at residues 67 to 144 (CILGPGDSDP…CPEPPRTQVQ (78 aa)) is disordered. Residues 98-110 (PQDTPPRSGTEPA) are compositionally biased toward polar residues. The bZIP domain maps to 239–302 (VLKKIRRKIR…LSLLEQLKHL (64 aa)). The segment at 241–270 (KKIRRKIRNKQSAQESRKKKKEYIDGLENR) is basic motif. The leucine-zipper stretch occupies residues 281-302 (LQRKVLHLEKQNLSLLEQLKHL). A Glycyl lysine isopeptide (Lys-Gly) (interchain with G-Cter in ubiquitin) cross-link involves residue K290. The chain crosses the membrane as a helical; Signal-anchor for type II membrane protein span at residues 318-338 (TCIAVLLLSFALIILPSISPF). Residues 339-479 (NSNKVDSPGD…RLVQDALGVL (141 aa)) are Lumenal-facing. Residues N411, N418, and N425 are each glycosylated (N-linked (GlcNAc...) asparagine).

This sequence belongs to the bZIP family. ATF subfamily. In terms of assembly, binds DNA as a dimer. May form homodimers. Interacts with ATF6. Interacts with SYNV1/HRD1; this interaction leads to CREB3L3 ubiquitination and proteasomal degradation. In terms of processing, following ER stress a fragment containing the cytoplasmic transcription factor domain is released by proteolysis. The cleavage seems to be performed sequentially by site-1 and site-2 proteases. N-glycosylation is required for optimal proteolytic activation. Post-translationally, ubiquitinated at Lys-290 by SYNV1/HRD1 via 'Lys-27'-linked ubiquitin. Expressed in adult liver (at protein level) and small intestine.

The protein localises to the endoplasmic reticulum membrane. It is found in the nucleus. In terms of biological role, transcription factor that may act during endoplasmic reticulum (ER) stress by activating unfolded protein response target genes. Activated in response to cAMP stimulation. Binds to the cAMP response element (CRE). Activates transcription through box-B element. Activates transcription through CRE. May function synergistically with ATF6. In acute inflammatory response, may activate expression of acute phase response (APR) genes. May be involved in growth suppression. Regulates FGF21 transcription. Plays a crucial role in the regulation of triglyceride metabolism and is required for the maintenance of normal plasma triglyceride concentrations. This chain is Cyclic AMP-responsive element-binding protein 3-like protein 3 (Creb3l3), found in Mus musculus (Mouse).